Reading from the N-terminus, the 213-residue chain is Small ribosomal subunit protein uS5 (213 aa).

The interval 1 to 42 (MSERDRNGGRSADNNRNDRNERGGRNDRGGRNDRRNNQQDER) is disordered. The S5 DRBM domain maps to 45 to 108 (YIERVVTINR…EEARKNFFRV (64 aa)).

The protein belongs to the universal ribosomal protein uS5 family. In terms of assembly, part of the 30S ribosomal subunit. Contacts proteins S4 and S8.

With S4 and S12 plays an important role in translational accuracy. Its function is as follows. Located at the back of the 30S subunit body where it stabilizes the conformation of the head with respect to the body. The protein is Small ribosomal subunit protein uS5 of Corynebacterium urealyticum (strain ATCC 43042 / DSM 7109).